Reading from the N-terminus, the 303-residue chain is Acetylglutamate kinase (303 aa).

Residues 68 to 69, arginine 90, and asparagine 194 each bind substrate; that span reads GG.

The protein belongs to the acetylglutamate kinase family. ArgB subfamily.

It localises to the cytoplasm. The catalysed reaction is N-acetyl-L-glutamate + ATP = N-acetyl-L-glutamyl 5-phosphate + ADP. Its pathway is amino-acid biosynthesis; L-arginine biosynthesis; N(2)-acetyl-L-ornithine from L-glutamate: step 2/4. In terms of biological role, catalyzes the ATP-dependent phosphorylation of N-acetyl-L-glutamate. This is Acetylglutamate kinase from Psychrobacter arcticus (strain DSM 17307 / VKM B-2377 / 273-4).